The primary structure comprises 356 residues: Tyrosine recombinase XerS (356 aa).

The 106-residue stretch at 16–121 (VMPWYVLDYY…ALSSLYKYLT (106 aa)) folds into the Core-binding (CB) domain. One can recognise a Tyr recombinase domain in the interval 169–354 (AFLDYVDKEY…VNDEQKNALD (186 aa)). Catalysis depends on residues Arg-210, Lys-234, His-306, Arg-309, and His-332. The active-site O-(3'-phospho-DNA)-tyrosine intermediate is the Tyr-341.

The protein belongs to the 'phage' integrase family. XerS subfamily.

It localises to the cytoplasm. Its activity is regulated as follows. FtsK is required for recombination. Site-specific tyrosine recombinase, which acts by catalyzing the cutting and rejoining of the recombining DNA molecules. Essential to convert dimers of the bacterial chromosome into monomers to permit their segregation at cell division. This chain is Tyrosine recombinase XerS, found in Streptococcus pyogenes serotype M28 (strain MGAS6180).